We begin with the raw amino-acid sequence, 1572 residues long: MASSAREHLLFVRRRNPQMRYTLSPENLQSLAAQSSMPENMTLQRANSDTDLVTSESRSSLTASMYEYTLGQAQNLIIFWDIKEEVDPSDWIGLYHIDENSPANFWDSKNRGVTGTQKGQIVWRIEPGPYFMEPEIKICFKYYHGISGALRATTPCITVKNPAVMMGAEGMEGGASGNLHSRKLVSFTLSDLRAVGLKKGMFFNPDPYLKMSIQPGKKSSFPTCAHHGQERRSTIISNTTNPIWHREKYSFFALLTDVLEIEIKDKFAKSRPIIKRFLGKLTIPVQRLLERQAIGDQMLSYNLGRRLPADHVSGYLQFKVEVTSSVHEDASPEAVGTILGVNSVNGDLGSPSDDEDMPGSHHDSQVCSNGPVSEDSAADGTPKHSFRTSSTLEIDTEELTSTSSRTSPPRGRQDSLNDYLDAIEHNGHSRPGTATCSERSMGASPKLRSSFPTDTRLNAMLHIDSDEEDHEFQQDLGYPSSLEEEGGLIMFSRASRADDGSLTSQTKLEDNPVENEEASTHEAASFEDKPENLPELAESSLPAGPAPEEGEGGPEPQPSADQGSAELCGSQEVDQPTSGADTGTSDASGGSRRAVSETESLDQGSEPSQVSSETEPSDPARTESVSEASTRPEGESDLECADSSCNESVTTQLSSVDTRCSSLESARFPETPAFSSQEEEDGACAAEPTSSGPAEGSQESVCTAGSLPVVQVPSGEDEGPGAESATVPDQEELGEVWQRRGSLEGAAAAAESPPQEEGSAGEAQGTCEGATAQEEGATGGSQANGHQPLRSLPSVRQDVSRYQRVDEALPPNWEARIDSHGRIFYVDHVNRTTTWQRPTAPPAPQVLQRSNSIQQMEQLNRRYQSIRRTMTNERPEENTNAIDGAGEEADFHQASADFRRENILPHSTSRSRITLLLQSPPVKFLISPEFFTVLHSNPSAYRMFTNNTCLKHMITKVRRDTHHFERYQHNRDLVGFLNMFANKQLELPRGWEMKHDHQGKAFFVDHNSRTTTFIDPRLPLQSSRPTSALVHRQHLTRQRSHSAGEVGEDSRHAGPPVLPRPSSTFNTVSRPQYQDMVPVAYNDKIVAFLRQPNIFEILQERQPDLTRNHSLREKIQFIRTEGTPGLVRLSSDADLVMLLSLFEEEIMSYVPPHALLHPSYCQSPRGSPVSSPQNSPGTQRANARAPAPYKRDFEAKLRNFYRKLETKGYGQGPGKLKLIIRRDHLLEDAFNQIMGYSRKDLQRNKLYVTFVGEEGLDYSGPSREFFFLVSRELFNPYYGLFEYSANDTYTVQISPMSAFVDNHHEWFRFSGRILGLALIHQYLLDAFFTRPFYKALLRILCDLSDLEYLDEEFHQSLQWMKDNDIHDILDLTFTVNEEVFGQITERELKPGGANIPVTEKNKKEYIERMVKWRIERGVVQQTESLVRGFYEVVDARLVSVFDARELELVIAGTAEIDLSDWRNNTEYRGGYHDNHIVIRWFWAAVERFNNEQRLRLLQFVTGTSSIPYEGFASLRGSNGPRRFCVEKWGKITALPRAHTCFNRLDLPPYPSFSMLYEKLLTAVEETSTFGLE.

At S48 the chain carries Phosphoserine. One can recognise a C2 domain in the interval 167 to 301; that stretch reads GAEGMEGGAS…QAIGDQMLSY (135 aa). Disordered stretches follow at residues 341 to 452 and 489 to 796; these read VNSV…SSFP and IMFS…PSVR. Residues 400-410 are compositionally biased toward low complexity; sequence TSTSSRTSPPR. The span at 518-532 shows a compositional bias: basic and acidic residues; the sequence is ASTHEAASFEDKPEN. 4 stretches are compositionally biased toward polar residues: residues 572–588, 597–614, 643–664, and 688–703; these read EVDQ…SDAS, ETES…SSET, SSCN…SSLE, and PTSS…SVCT. The tract at residues 737–1068 is interaction with TP73; sequence WQRRGSLEGA…PRPSSTFNTV (332 aa). A compositionally biased stretch (low complexity) spans 744–776; sequence EGAAAAAESPPQEEGSAGEAQGTCEGATAQEEG. The region spanning 807–840 is the WW 1 domain; that stretch reads EALPPNWEARIDSHGRIFYVDHVNRTTTWQRPTA. Residues 847-874 are a coiled coil; the sequence is LQRSNSIQQMEQLNRRYQSIRRTMTNER. S852 and S909 each carry phosphoserine. The WW 2 domain maps to 985–1018; sequence LELPRGWEMKHDHQGKAFFVDHNSRTTTFIDPRL. 2 disordered regions span residues 1024–1069 and 1161–1187; these read RPTS…NTVS and CQSP…RAPA. Residues 1031–1040 are compositionally biased toward basic residues; sequence HRQHLTRQRS. The segment covering 1161-1181 has biased composition (polar residues); it reads CQSPRGSPVSSPQNSPGTQRA. At S1175 the chain carries Phosphoserine. An HECT domain is found at 1237-1572; it reads SRKDLQRNKL…VEETSTFGLE (336 aa). The Glycyl thioester intermediate role is filled by C1540.

In terms of assembly, interacts with TP73. Interacts with FZR1. Post-translationally, ubiquitinated and degraded during mitotic exit by APC/C-Cdh1. Predominantly expressed in adult brain, lung and heart.

It is found in the cytoplasm. Its subcellular location is the cytoskeleton. The protein localises to the spindle. The enzyme catalyses S-ubiquitinyl-[E2 ubiquitin-conjugating enzyme]-L-cysteine + [acceptor protein]-L-lysine = [E2 ubiquitin-conjugating enzyme]-L-cysteine + N(6)-ubiquitinyl-[acceptor protein]-L-lysine.. It functions in the pathway protein modification; protein ubiquitination. Functionally, E3 ubiquitin-protein ligase that mediates ubiquitination of TP73. Acts to stabilize TP73 and enhance activation of transcription by TP73. Involved in the regulation of mitotic metaphase/anaphase transition. The sequence is that of E3 ubiquitin-protein ligase HECW2 (HECW2) from Homo sapiens (Human).